A 164-amino-acid polypeptide reads, in one-letter code: R-phycoerythrin alpha chain (164 aa).

Residues Asn47, Lys81, Cys82, Arg84, His88, Arg137, Cys139, and Arg142 each contribute to the (2R,3E)-phycoerythrobilin site.

Belongs to the phycobiliprotein family. In terms of assembly, heterododecamer of 6 alpha and 6 beta chains. The basic functional unit of phycobiliproteins is a ring-shaped hexamer formed from two back-to-back trimers contacting via the alpha chain subunits. The trimers are composed of alpha/beta subunit heterodimers arranged around a three-fold axis of symmetry. The phycoerythrins also contain a gamma subunit which is located in the center of the hexamer. Contains two covalently linked phycoerythrobilin chromophores.

The protein localises to the plastid. The protein resides in the chloroplast thylakoid membrane. Light-harvesting photosynthetic tetrapyrrole chromophore-protein from the phycobiliprotein complex. This chain is R-phycoerythrin alpha chain (cpeA), found in Griffithsia monilis (Red alga).